We begin with the raw amino-acid sequence, 147 residues long: Mitochondrial import receptor subunit TOM20 homolog (147 aa).

The Mitochondrial intermembrane portion of the chain corresponds to 1–3; sequence MVA. A helical transmembrane segment spans residues 4–26; the sequence is VGKTSAIAAGVCGALLLGYCIYF. Residues 27-147 lie on the Cytoplasmic side of the membrane; it reads DRKRRSDPNF…AQNLSEDDVE (121 aa).

It belongs to the Tom20 family. As to quaternary structure, forms part of the preprotein translocase complex of the outer mitochondrial membrane (TOM complex). Interacts with tom22.

Its subcellular location is the mitochondrion outer membrane. Central component of the receptor complex responsible for the recognition and translocation of cytosolically synthesized mitochondrial preproteins. Together with tom22 functions as the transit peptide receptor at the surface of the mitochondrion outer membrane and facilitates the movement of preproteins into the tom40 translocation pore. The polypeptide is Mitochondrial import receptor subunit TOM20 homolog (tomm20) (Xenopus laevis (African clawed frog)).